Reading from the N-terminus, the 343-residue chain is Ribosome production factor 1 (343 aa).

Composition is skewed to basic and acidic residues over residues 1 to 10 (MAEKKGPEAK) and 82 to 91 (EREALGDKAP). 2 disordered regions span residues 1–51 (MAEK…LSEI) and 77–97 (KKRKKEREALGDKAPPKPVPK). The region spanning 136–319 (PKILITTSDR…LRSLQKGTFD (184 aa)) is the Brix domain. The segment at 297-314 (VGIQELGPRFTLKLRSLQ) is RNA-binding.

It is found in the nucleus. Its subcellular location is the nucleolus. In terms of biological role, may be required for ribosome biogenesis. The chain is Ribosome production factor 1 (rpf1) from Xenopus laevis (African clawed frog).